The following is a 357-amino-acid chain: tRNA-specific 2-thiouridylase MnmA (357 aa).

Residues Ala-11 to Ser-18 and Leu-37 contribute to the ATP site. The Nucleophile role is filled by Cys-102. An intrachain disulfide couples Cys-102 to Cys-197. Gly-126 contributes to the ATP binding site. The interaction with tRNA stretch occupies residues Lys-148 to Gln-150. Residue Cys-197 is the Cysteine persulfide intermediate of the active site. Residues Arg-301–Tyr-302 form an interaction with tRNA region.

The protein belongs to the MnmA/TRMU family.

The protein resides in the cytoplasm. The catalysed reaction is S-sulfanyl-L-cysteinyl-[protein] + uridine(34) in tRNA + AH2 + ATP = 2-thiouridine(34) in tRNA + L-cysteinyl-[protein] + A + AMP + diphosphate + H(+). Its function is as follows. Catalyzes the 2-thiolation of uridine at the wobble position (U34) of tRNA, leading to the formation of s(2)U34. The sequence is that of tRNA-specific 2-thiouridylase MnmA from Dehalococcoides mccartyi (strain ATCC BAA-2266 / KCTC 15142 / 195) (Dehalococcoides ethenogenes (strain 195)).